Here is a 106-residue protein sequence, read N- to C-terminus: Large ribosomal subunit protein eL42 (106 aa).

Residues cysteine 12, cysteine 17, cysteine 74, and cysteine 77 each coordinate Zn(2+).

This sequence belongs to the eukaryotic ribosomal protein eL42 family. In terms of assembly, component of the large ribosomal subunit. Mature ribosomes consist of a small (40S) and a large (60S) subunit. The 40S subunit contains about 32 different proteins and 1 molecule of RNA (18S). The 60S subunit contains 45 different proteins and 3 molecules of RNA (25S, 5.8S and 5S). Requires Zn(2+) as cofactor.

It is found in the cytoplasm. Its function is as follows. Component of the ribosome, a large ribonucleoprotein complex responsible for the synthesis of proteins in the cell. The small ribosomal subunit (SSU) binds messenger RNAs (mRNAs) and translates the encoded message by selecting cognate aminoacyl-transfer RNA (tRNA) molecules. The large subunit (LSU) contains the ribosomal catalytic site termed the peptidyl transferase center (PTC), which catalyzes the formation of peptide bonds, thereby polymerizing the amino acids delivered by tRNAs into a polypeptide chain. The nascent polypeptides leave the ribosome through a tunnel in the LSU and interact with protein factors that function in enzymatic processing, targeting, and the membrane insertion of nascent chains at the exit of the ribosomal tunnel. This Candida albicans (strain SC5314 / ATCC MYA-2876) (Yeast) protein is Large ribosomal subunit protein eL42 (RPL44).